The primary structure comprises 124 residues: Suppressor of RNA silencing (124 aa).

A basic motif (BM) region spans residues 1–14; that stretch reads MPKSEFFREERKRR. The tract at residues 30–68 is C-2; that stretch reads CGYSCGMPPAVEKVSVPADTEEDVYMLIFPYEQFCGEKH. The stretch at 72–124 forms a coiled coil; sequence YESLKDVSDDELKLRRLERQRETLLASFQQKLKRYDEKIALLSEKFKNLRSKL. Ser79 is subject to Phosphoserine.

Belongs to the virgaviridae suppressor of RNA silencing family. In terms of assembly, homooligomer. In terms of processing, phosphorylated at Ser-79 by a host PKA-like kinase; the phosphorylation at this site seems to suppress host cell death.

The protein resides in the host chloroplast envelope. Its subcellular location is the host endoplasmic reticulum. It is found in the host cell junction. It localises to the host plasmodesma. In terms of biological role, suppressor of RNA-mediated gene silencing, also known as post-transcriptional gene silencing (PTGS), a mechanism of plant viral defense that limits the accumulation of viral RNAs. Promotes viral cell-to-cell long distance movement. The chain is Suppressor of RNA silencing from Peanut clump virus (isolate 87/TGTA2) (PCV).